The following is a 449-amino-acid chain: Bifunctional protein GlmU (449 aa).

The segment at Met-1–Arg-229 is pyrophosphorylase. Residues Leu-8 to Gly-11, Lys-22, Gln-73, and Gly-78 to Thr-79 each bind UDP-N-acetyl-alpha-D-glucosamine. Mg(2+) is bound at residue Asp-102. Residues Gly-139, Glu-154, Asn-169, and Asn-227 each contribute to the UDP-N-acetyl-alpha-D-glucosamine site. Position 227 (Asn-227) interacts with Mg(2+). The linker stretch occupies residues Val-230 to Ser-250. The tract at residues Gly-251 to Gly-449 is N-acetyltransferase. Positions 332 and 350 each coordinate UDP-N-acetyl-alpha-D-glucosamine. The active-site Proton acceptor is the His-362. Residues Tyr-365 and Asn-376 each contribute to the UDP-N-acetyl-alpha-D-glucosamine site. Acetyl-CoA contacts are provided by residues Ala-379, Asn-385–Tyr-386, Ser-404, Ala-422, and Arg-439.

This sequence in the N-terminal section; belongs to the N-acetylglucosamine-1-phosphate uridyltransferase family. In the C-terminal section; belongs to the transferase hexapeptide repeat family. Homotrimer. It depends on Mg(2+) as a cofactor.

It localises to the cytoplasm. The catalysed reaction is alpha-D-glucosamine 1-phosphate + acetyl-CoA = N-acetyl-alpha-D-glucosamine 1-phosphate + CoA + H(+). It catalyses the reaction N-acetyl-alpha-D-glucosamine 1-phosphate + UTP + H(+) = UDP-N-acetyl-alpha-D-glucosamine + diphosphate. It functions in the pathway nucleotide-sugar biosynthesis; UDP-N-acetyl-alpha-D-glucosamine biosynthesis; N-acetyl-alpha-D-glucosamine 1-phosphate from alpha-D-glucosamine 6-phosphate (route II): step 2/2. Its pathway is nucleotide-sugar biosynthesis; UDP-N-acetyl-alpha-D-glucosamine biosynthesis; UDP-N-acetyl-alpha-D-glucosamine from N-acetyl-alpha-D-glucosamine 1-phosphate: step 1/1. The protein operates within bacterial outer membrane biogenesis; LPS lipid A biosynthesis. Functionally, catalyzes the last two sequential reactions in the de novo biosynthetic pathway for UDP-N-acetylglucosamine (UDP-GlcNAc). The C-terminal domain catalyzes the transfer of acetyl group from acetyl coenzyme A to glucosamine-1-phosphate (GlcN-1-P) to produce N-acetylglucosamine-1-phosphate (GlcNAc-1-P), which is converted into UDP-GlcNAc by the transfer of uridine 5-monophosphate (from uridine 5-triphosphate), a reaction catalyzed by the N-terminal domain. In Syntrophomonas wolfei subsp. wolfei (strain DSM 2245B / Goettingen), this protein is Bifunctional protein GlmU.